The chain runs to 330 residues: Ferredoxin--NADP reductase (330 aa).

FAD contacts are provided by glutamate 35, glutamine 43, tyrosine 48, valine 90, phenylalanine 123, aspartate 285, and threonine 326.

This sequence belongs to the ferredoxin--NADP reductase type 2 family. In terms of assembly, homodimer. It depends on FAD as a cofactor.

It carries out the reaction 2 reduced [2Fe-2S]-[ferredoxin] + NADP(+) + H(+) = 2 oxidized [2Fe-2S]-[ferredoxin] + NADPH. The polypeptide is Ferredoxin--NADP reductase (Streptococcus pyogenes serotype M28 (strain MGAS6180)).